Here is a 570-residue protein sequence, read N- to C-terminus: Proline--tRNA ligase (570 aa).

Belongs to the class-II aminoacyl-tRNA synthetase family. ProS type 1 subfamily. As to quaternary structure, homodimer.

Its subcellular location is the cytoplasm. The enzyme catalyses tRNA(Pro) + L-proline + ATP = L-prolyl-tRNA(Pro) + AMP + diphosphate. Catalyzes the attachment of proline to tRNA(Pro) in a two-step reaction: proline is first activated by ATP to form Pro-AMP and then transferred to the acceptor end of tRNA(Pro). As ProRS can inadvertently accommodate and process non-cognate amino acids such as alanine and cysteine, to avoid such errors it has two additional distinct editing activities against alanine. One activity is designated as 'pretransfer' editing and involves the tRNA(Pro)-independent hydrolysis of activated Ala-AMP. The other activity is designated 'posttransfer' editing and involves deacylation of mischarged Ala-tRNA(Pro). The misacylated Cys-tRNA(Pro) is not edited by ProRS. This is Proline--tRNA ligase from Geotalea daltonii (strain DSM 22248 / JCM 15807 / FRC-32) (Geobacter daltonii).